The chain runs to 45 residues: Pseudo-hevein (45 aa).

The region spanning 1 to 43 (EQCGRQAGGKLCPNNLCCSQYGWCGSSDDYCSPSKNCQSNCKG) is the Chitin-binding type-1 domain. Cystine bridges form between cysteine 3-cysteine 18, cysteine 12-cysteine 24, cysteine 17-cysteine 31, and cysteine 37-cysteine 41.

Its function is as follows. N-acetyl-D-glucosamine / N-acetyl-D-neuraminic acid binding lectin. Can inhibit fungal growth. This Hevea brasiliensis (Para rubber tree) protein is Pseudo-hevein.